A 392-amino-acid polypeptide reads, in one-letter code: Probable tRNA sulfurtransferase (392 aa).

A THUMP domain is found at Gln60 to Lys162. ATP is bound by residues Leu180–Leu181, Thr205–Phe206, Arg264, Gly286, and Gln295.

This sequence belongs to the ThiI family.

The protein resides in the cytoplasm. The enzyme catalyses [ThiI sulfur-carrier protein]-S-sulfanyl-L-cysteine + a uridine in tRNA + 2 reduced [2Fe-2S]-[ferredoxin] + ATP + H(+) = [ThiI sulfur-carrier protein]-L-cysteine + a 4-thiouridine in tRNA + 2 oxidized [2Fe-2S]-[ferredoxin] + AMP + diphosphate. The catalysed reaction is [ThiS sulfur-carrier protein]-C-terminal Gly-Gly-AMP + S-sulfanyl-L-cysteinyl-[cysteine desulfurase] + AH2 = [ThiS sulfur-carrier protein]-C-terminal-Gly-aminoethanethioate + L-cysteinyl-[cysteine desulfurase] + A + AMP + 2 H(+). It participates in cofactor biosynthesis; thiamine diphosphate biosynthesis. In terms of biological role, catalyzes the ATP-dependent transfer of a sulfur to tRNA to produce 4-thiouridine in position 8 of tRNAs, which functions as a near-UV photosensor. Also catalyzes the transfer of sulfur to the sulfur carrier protein ThiS, forming ThiS-thiocarboxylate. This is a step in the synthesis of thiazole, in the thiamine biosynthesis pathway. The sulfur is donated as persulfide by IscS. In Ureaplasma urealyticum serovar 10 (strain ATCC 33699 / Western), this protein is Probable tRNA sulfurtransferase.